The following is an 83-amino-acid chain: uncharacterized protein (83 aa).

This is an uncharacterized protein from Rhizobium meliloti (strain 1021) (Ensifer meliloti).